A 482-amino-acid polypeptide reads, in one-letter code: Protein farnesyltransferase subunit beta (482 aa).

PFTB repeat units lie at residues 131-172, 182-223, 230-271, and 278-319; these read ESNA…VTLG, REKM…SILN, TQGL…ILIN, and LDSL…VLLQ. Residues 256 to 259 and 298 to 301 contribute to the (2E,6E)-farnesyl diphosphate site; these read HGGY and RTNK. Zn(2+) contacts are provided by Asp-304 and Cys-306. (2E,6E)-farnesyl diphosphate is bound at residue 307 to 310; sequence YTFW. Residues 329 to 372 are disordered; the sequence is VHGSSHISEGTNEEHHAHDEDDLEDSDDDDDSDEDNDEDSVNGH. Acidic residues predominate over residues 348–368; the sequence is EDDLEDSDDDDDSDEDNDEDS. Residues 391–433 form a PFTB 5 repeat; that stretch reads SLGLQRYVLLCSKIPDGGFRDKPRKPRDFYHTCYCLSGLSVAQ. His-421 contacts Zn(2+).

The protein belongs to the protein prenyltransferase subunit beta family. Heterodimer of FTA and FTB (farnesyltransferase). Heterodimer of an alpha and a beta subunit. Zn(2+) is required as a cofactor.

It catalyses the reaction L-cysteinyl-[protein] + (2E,6E)-farnesyl diphosphate = S-(2E,6E)-farnesyl-L-cysteinyl-[protein] + diphosphate. In terms of biological role, catalyzes the transfer of a farnesyl moiety from farnesyl diphosphate to a cysteine at the fourth position from the C-terminus of several proteins having the C-terminal sequence Cys-aliphatic-aliphatic-X (CaaX). The beta subunit is responsible for peptide-binding. Acts as an abscisic acid (ABA) negative regulator by mediating ASG2 farnesylation and consequently monitoring its subcellular localization. Involved in responses to salt (NaCl) and osmotic (e.g. in response to mannitol and PEG) stresses. This is Protein farnesyltransferase subunit beta (FTB) from Arabidopsis thaliana (Mouse-ear cress).